The following is a 197-amino-acid chain: Ribonuclease HII (197 aa).

Residues 10–197 (ELIAGVDEVG…APVRKLLNTL (188 aa)) form the RNase H type-2 domain. A divalent metal cation contacts are provided by aspartate 16, glutamate 17, and aspartate 108.

It belongs to the RNase HII family. Mn(2+) is required as a cofactor. Mg(2+) serves as cofactor.

The protein localises to the cytoplasm. It catalyses the reaction Endonucleolytic cleavage to 5'-phosphomonoester.. Its function is as follows. Endonuclease that specifically degrades the RNA of RNA-DNA hybrids. This is Ribonuclease HII (rnhB) from Pasteurella multocida (strain Pm70).